The chain runs to 361 residues: Riboflavin biosynthesis protein RibD (361 aa).

The CMP/dCMP-type deaminase domain occupies 1–122 (MEEYYMKLAL…MMKEAGIEVR (122 aa)). The interval 1–144 (MEEYYMKLAL…EKFLHFMRTG (144 aa)) is deaminase. Residue His49 participates in Zn(2+) binding. Glu51 functions as the Proton donor in the catalytic mechanism. The Zn(2+) site is built by Cys74 and Cys83. A reductase region spans residues 145-361 (LPYVTLKAAA…IKLTAKPTKE (217 aa)). NADP(+) is bound at residue Ala153. Ser167 contacts substrate. Trp169 is a binding site for NADP(+). Substrate is bound at residue Arg183. Thr195 and Asp199 together coordinate NADP(+). Residues Leu203 and Arg206 each coordinate substrate. Thr221 contacts NADP(+). Glu290 contributes to the substrate binding site. NADP(+) is bound at residue 292–298 (GSAVHGS).

This sequence in the N-terminal section; belongs to the cytidine and deoxycytidylate deaminase family. It in the C-terminal section; belongs to the HTP reductase family. In terms of assembly, homotetramer. Zn(2+) serves as cofactor.

It catalyses the reaction 2,5-diamino-6-hydroxy-4-(5-phosphoribosylamino)-pyrimidine + H2O + H(+) = 5-amino-6-(5-phospho-D-ribosylamino)uracil + NH4(+). It carries out the reaction 5-amino-6-(5-phospho-D-ribitylamino)uracil + NADP(+) = 5-amino-6-(5-phospho-D-ribosylamino)uracil + NADPH + H(+). Its pathway is cofactor biosynthesis; riboflavin biosynthesis; 5-amino-6-(D-ribitylamino)uracil from GTP: step 2/4. The protein operates within cofactor biosynthesis; riboflavin biosynthesis; 5-amino-6-(D-ribitylamino)uracil from GTP: step 3/4. In terms of biological role, converts 2,5-diamino-6-(ribosylamino)-4(3h)-pyrimidinone 5'-phosphate into 5-amino-6-(ribosylamino)-2,4(1h,3h)-pyrimidinedione 5'-phosphate. This chain is Riboflavin biosynthesis protein RibD (ribD), found in Bacillus subtilis (strain 168).